Consider the following 280-residue polypeptide: Equatorin (280 aa).

The signal sequence occupies residues 1–19 (MDFILLIFLSGVFLPNIFS). The Vesicular segment spans residues 20-183 (LQPTVEQDPG…LSELEEIKLK (164 aa)). The tract at residues 112–131 (ATASGEEDKRSEPSRKSSTP) is disordered. Basic and acidic residues predominate over residues 117-126 (EEDKRSEPSR). Asn145 carries N-linked (GlcNAc...) asparagine glycosylation. Residues 184–204 (LMLGISLMTLILLIPLLIFCF) form a helical membrane-spanning segment. The Cytoplasmic portion of the chain corresponds to 205–280 (ATLYKLRHLR…AEVTEERISE (76 aa)). Ser279 is subject to Phosphoserine.

In terms of assembly, interacts with SNAP25. Post-translationally, highly N- and O-glycosylated; contains sialic acid. Highly expressed in testis and epididymis. Low expression in other tissues.

It localises to the cytoplasmic vesicle. The protein localises to the secretory vesicle. Its subcellular location is the acrosome membrane. The protein resides in the acrosome inner membrane. It is found in the acrosome outer membrane. Acrosomal membrane-anchored protein involved in the process of fertilization and in acrosome biogenesis. The protein is Equatorin (Eqtn) of Rattus norvegicus (Rat).